A 289-amino-acid chain; its full sequence is Rhodopsin (289 aa).

The Extracellular portion of the chain corresponds to 1–7; sequence YLVNPAA. Residues 8-32 form a helical membrane-spanning segment; sequence YAALGAYMFLLILIGFPVNFLTLYV. The Cytoplasmic segment spans residues 33 to 44; sequence TLEHKKLRTPLN. The chain crosses the membrane as a helical span at residues 45–67; sequence YILLNLAVADLFMVLGGFTTTMY. Over 68–81 the chain is Extracellular; the sequence is TSMHGYFVLGRLGC. An intrachain disulfide couples cysteine 81 to cysteine 158. The helical transmembrane segment at 82–104 threads the bilayer; the sequence is NLEGFFATLGGEIALWSLVVLAI. Positions 105–107 match the 'Ionic lock' involved in activated form stabilization motif; the sequence is ERW. Topologically, residues 105–123 are cytoplasmic; that stretch reads ERWIVVCKPISNFRFTEDH. The helical transmembrane segment at 124 to 144 threads the bilayer; the sequence is AIMGLAFSWVMALSCSVPPLV. Topologically, residues 145 to 173 are extracellular; that stretch reads GWSRYIPEAMQCSCGVDYYTRAEGFNTES. A helical transmembrane segment spans residues 174–195; it reads FVLYMFTVHFLIPLSVIFFCYG. Residues 196–223 are Cytoplasmic-facing; sequence RLLCAVKEAAAAQQESETTQRSEKEVSR. The helical transmembrane segment at 224–245 threads the bilayer; the sequence is MVVLMVIGFLVCWLPYASTAWW. Topologically, residues 246–257 are extracellular; it reads IFCNQGSEFGPV. A helical transmembrane segment spans residues 258 to 279; sequence FMTIPAFFAKSSAIYNPMIYIC. Lysine 267 is subject to N6-(retinylidene)lysine. Residues 280 to 289 lie on the Cytoplasmic side of the membrane; it reads MNKQFRHCMI.

The protein belongs to the G-protein coupled receptor 1 family. Opsin subfamily. Post-translationally, phosphorylated on some or all of the serine and threonine residues present in the C-terminal region. Contains one covalently linked retinal chromophore.

It is found in the membrane. The protein localises to the cell projection. It localises to the cilium. Its subcellular location is the photoreceptor outer segment. Functionally, photoreceptor required for image-forming vision at low light intensity. While most salt water fish species use retinal as chromophore, most freshwater fish use 3-dehydroretinal, or a mixture of retinal and 3-dehydroretinal. Light-induced isomerization of 11-cis to all-trans retinal triggers a conformational change that activates signaling via G-proteins. Subsequent receptor phosphorylation mediates displacement of the bound G-protein alpha subunit by arrestin and terminates signaling. This chain is Rhodopsin (rho), found in Comephorus dybowskii.